Here is a 129-residue protein sequence, read N- to C-terminus: Glycine cleavage system H protein (129 aa).

Residues 24 to 106 (EAVVGITEHA…YGAGWLFRIK (83 aa)) form the Lipoyl-binding domain. Lysine 65 is modified (N6-lipoyllysine).

This sequence belongs to the GcvH family. As to quaternary structure, the glycine cleavage system is composed of four proteins: P, T, L and H. It depends on (R)-lipoate as a cofactor.

Functionally, the glycine cleavage system catalyzes the degradation of glycine. The H protein shuttles the methylamine group of glycine from the P protein to the T protein. The polypeptide is Glycine cleavage system H protein (Aeromonas hydrophila subsp. hydrophila (strain ATCC 7966 / DSM 30187 / BCRC 13018 / CCUG 14551 / JCM 1027 / KCTC 2358 / NCIMB 9240 / NCTC 8049)).